A 461-amino-acid chain; its full sequence is Glycine--tRNA ligase (461 aa).

Arginine 100 and glutamate 174 together coordinate substrate. ATP-binding positions include 206-208 (RNE), 216-221 (FRTREF), 290-291 (EL), and 334-337 (GVDR). 221-225 (FEQME) lines the substrate pocket. 330-334 (EPSVG) serves as a coordination point for substrate.

This sequence belongs to the class-II aminoacyl-tRNA synthetase family. As to quaternary structure, homodimer.

Its subcellular location is the cytoplasm. The enzyme catalyses tRNA(Gly) + glycine + ATP = glycyl-tRNA(Gly) + AMP + diphosphate. In terms of biological role, catalyzes the attachment of glycine to tRNA(Gly). This chain is Glycine--tRNA ligase, found in Caldanaerobacter subterraneus subsp. tengcongensis (strain DSM 15242 / JCM 11007 / NBRC 100824 / MB4) (Thermoanaerobacter tengcongensis).